Consider the following 254-residue polypeptide: Type III pantothenate kinase (254 aa).

6–13 (DVGNSNIV) is a binding site for ATP. Substrate-binding positions include Tyr-100 and 107 to 110 (GADR). Asp-109 serves as the catalytic Proton acceptor. A K(+)-binding site is contributed by Asp-129. Thr-132 serves as a coordination point for ATP. Thr-184 is a binding site for substrate.

It belongs to the type III pantothenate kinase family. Homodimer. NH4(+) is required as a cofactor. K(+) serves as cofactor.

The protein resides in the cytoplasm. The catalysed reaction is (R)-pantothenate + ATP = (R)-4'-phosphopantothenate + ADP + H(+). It participates in cofactor biosynthesis; coenzyme A biosynthesis; CoA from (R)-pantothenate: step 1/5. In terms of biological role, catalyzes the phosphorylation of pantothenate (Pan), the first step in CoA biosynthesis. The polypeptide is Type III pantothenate kinase (Citrifermentans bemidjiense (strain ATCC BAA-1014 / DSM 16622 / JCM 12645 / Bem) (Geobacter bemidjiensis)).